Consider the following 506-residue polypeptide: COP9 signalosome complex subunit 2 (506 aa).

The 169-residue stretch at 252–420 (SEENWEEAQS…GTVVVESASD (169 aa)) folds into the PCI domain. Basic residues predominate over residues 482 to 491 (SGHRFRRGGK). Positions 482–506 (SGHRFRRGGKGSKAGGGLGMKTGLF) are disordered. Residues 492–506 (GSKAGGGLGMKTGLF) show a composition bias toward gly residues.

The protein belongs to the CSN2 family. As to quaternary structure, component of the COP9 signalosome (CSN) complex.

Its subcellular location is the cytoplasm. It localises to the nucleus. Functionally, component of the COP9 signalosome (CSN) complex that acts as an regulator of the ubiquitin (Ubl) conjugation pathway by mediating the deneddylation of the cullin subunit of SCF-type E3 ubiquitin-protein ligase complexes. The CSN complex seems to link protein degradation to sexual development. Required for fruit body formation. The polypeptide is COP9 signalosome complex subunit 2 (csnB) (Emericella nidulans (strain FGSC A4 / ATCC 38163 / CBS 112.46 / NRRL 194 / M139) (Aspergillus nidulans)).